We begin with the raw amino-acid sequence, 250 residues long: C-X-C motif chemokine 16 (250 aa).

The N-terminal stretch at 1 to 24 (MPLWELWFFLLALFLAWLTPPGNG) is a signal peptide. The Extracellular portion of the chain corresponds to 25-200 (NEGSMAGSCP…NVGATAGTSA (176 aa)). 2 disulfide bridges follow: C33–C63 and C35–C77. A disordered region spans residues 105 to 186 (VAHQQHLAPQ…AKSEARENQE (82 aa)). Polar residues-rich tracts occupy residues 128-147 (DSSTPAQTNLPSTLQPTQKP) and 163-172 (TSETDTSTVG). A helical transmembrane segment spans residues 201–221 (LVPVLSLLVIIFLLTGVLLYV). Topologically, residues 222–250 (MCKKRQEQSRQYPPDPQLHYVPVASNINT) are cytoplasmic.

The protein belongs to the intercrine alpha (chemokine CxC) family. In terms of processing, glycosylated.

The protein localises to the membrane. Its function is as follows. Induces a strong chemotactic response. Induces calcium mobilization. Binds to CXCR6/Bonzo. Also acts as a scavenger receptor on macrophages, which specifically binds to OxLDL (oxidized low density lipoprotein), suggesting that it may be involved in pathophysiology such as atherogenesis. The protein is C-X-C motif chemokine 16 (CXCL16) of Sus scrofa (Pig).